Here is a 116-residue protein sequence, read N- to C-terminus: U16-barytoxin-Tl1a (116 aa).

The signal sequence occupies residues 1-20 (MKTIIVFLSLLVLATKFGDA). The propeptide occupies 21–74 (KEGVNQEQKKEVTQNEFRVEYLNEMAAMSLLQQLEAIESALFEKEAGRNSRQKR). 3 disulfide bridges follow: cysteine 75-cysteine 90, cysteine 82-cysteine 95, and cysteine 89-cysteine 110.

It belongs to the neurotoxin 14 (magi-1) family. 06 (ICK-Trit) subfamily. As to expression, expressed by the venom gland.

It is found in the secreted. Ion channel inhibitor. The sequence is that of U16-barytoxin-Tl1a from Trittame loki (Brush-footed trapdoor spider).